The primary structure comprises 189 residues: Adenylate kinase (189 aa).

ATP is bound at residue 10–15; it reads AAGKGT. The tract at residues 30 to 59 is NMP; that stretch reads STGDMLRAARASGSELGQRVAKIMDEGGLV. AMP is bound by residues Thr31, Arg36, 57–59, 85–88, and Gln92; these read GLV and GFPR. The segment at 126-136 is LID; it reads KRFEEQGRADD. Arg127 lines the ATP pocket. Arg133 and Arg144 together coordinate AMP. Position 172 (Gly172) interacts with ATP.

The protein belongs to the adenylate kinase family. Monomer.

It is found in the cytoplasm. It carries out the reaction AMP + ATP = 2 ADP. It functions in the pathway purine metabolism; AMP biosynthesis via salvage pathway; AMP from ADP: step 1/1. Catalyzes the reversible transfer of the terminal phosphate group between ATP and AMP. Plays an important role in cellular energy homeostasis and in adenine nucleotide metabolism. The polypeptide is Adenylate kinase (Hyphomonas neptunium (strain ATCC 15444)).